A 315-amino-acid polypeptide reads, in one-letter code: 4-hydroxy-3-methylbut-2-enyl diphosphate reductase (315 aa).

[4Fe-4S] cluster is bound at residue Cys12. The (2E)-4-hydroxy-3-methylbut-2-enyl diphosphate site is built by His41 and His74. Dimethylallyl diphosphate is bound by residues His41 and His74. Residues His41 and His74 each contribute to the isopentenyl diphosphate site. Cys96 is a binding site for [4Fe-4S] cluster. His124 contacts (2E)-4-hydroxy-3-methylbut-2-enyl diphosphate. His124 contributes to the dimethylallyl diphosphate binding site. Isopentenyl diphosphate is bound at residue His124. Glu126 functions as the Proton donor in the catalytic mechanism. Position 168 (Thr168) interacts with (2E)-4-hydroxy-3-methylbut-2-enyl diphosphate. Residue Cys198 coordinates [4Fe-4S] cluster. The (2E)-4-hydroxy-3-methylbut-2-enyl diphosphate site is built by Ser226, Ser227, Asn228, and Ser270. Residues Ser226, Ser227, Asn228, and Ser270 each contribute to the dimethylallyl diphosphate site. Isopentenyl diphosphate contacts are provided by Ser226, Ser227, Asn228, and Ser270.

The protein belongs to the IspH family. The cofactor is [4Fe-4S] cluster.

It catalyses the reaction isopentenyl diphosphate + 2 oxidized [2Fe-2S]-[ferredoxin] + H2O = (2E)-4-hydroxy-3-methylbut-2-enyl diphosphate + 2 reduced [2Fe-2S]-[ferredoxin] + 2 H(+). The catalysed reaction is dimethylallyl diphosphate + 2 oxidized [2Fe-2S]-[ferredoxin] + H2O = (2E)-4-hydroxy-3-methylbut-2-enyl diphosphate + 2 reduced [2Fe-2S]-[ferredoxin] + 2 H(+). Its pathway is isoprenoid biosynthesis; dimethylallyl diphosphate biosynthesis; dimethylallyl diphosphate from (2E)-4-hydroxy-3-methylbutenyl diphosphate: step 1/1. The protein operates within isoprenoid biosynthesis; isopentenyl diphosphate biosynthesis via DXP pathway; isopentenyl diphosphate from 1-deoxy-D-xylulose 5-phosphate: step 6/6. Functionally, catalyzes the conversion of 1-hydroxy-2-methyl-2-(E)-butenyl 4-diphosphate (HMBPP) into a mixture of isopentenyl diphosphate (IPP) and dimethylallyl diphosphate (DMAPP). Acts in the terminal step of the DOXP/MEP pathway for isoprenoid precursor biosynthesis. In Pseudomonas fluorescens (strain SBW25), this protein is 4-hydroxy-3-methylbut-2-enyl diphosphate reductase.